The primary structure comprises 579 residues: Arginine--tRNA ligase (579 aa).

The 'HIGH' region motif lies at 128–138 (PNLAKEMHVGH).

The protein belongs to the class-I aminoacyl-tRNA synthetase family. In terms of assembly, monomer.

It localises to the cytoplasm. The enzyme catalyses tRNA(Arg) + L-arginine + ATP = L-arginyl-tRNA(Arg) + AMP + diphosphate. The protein is Arginine--tRNA ligase of Pseudomonas syringae pv. syringae (strain B728a).